Consider the following 334-residue polypeptide: Protein-methionine-sulfoxide reductase catalytic subunit MsrP (334 aa).

Positions 1-44 form a signal peptide, tat-type signal; the sequence is MKKIRPLTEADVTAESAFFMQRRQVLKALGISAAALSLPSTAQA. Residues Asn-88, 91–92, Cys-146, Thr-181, Asn-233, Arg-238, and 249–251 each bind Mo-molybdopterin; these read YE and GIK.

The protein belongs to the MsrP family. Heterodimer of a catalytic subunit (MsrP) and a heme-binding subunit (MsrQ). The cofactor is Mo-molybdopterin. In terms of processing, predicted to be exported by the Tat system. The position of the signal peptide cleavage has not been experimentally proven.

It is found in the periplasm. It catalyses the reaction L-methionyl-[protein] + a quinone + H2O = L-methionyl-(S)-S-oxide-[protein] + a quinol. The catalysed reaction is L-methionyl-[protein] + a quinone + H2O = L-methionyl-(R)-S-oxide-[protein] + a quinol. Functionally, part of the MsrPQ system that repairs oxidized periplasmic proteins containing methionine sulfoxide residues (Met-O), using respiratory chain electrons. Thus protects these proteins from oxidative-stress damage caused by reactive species of oxygen and chlorine generated by the host defense mechanisms. MsrPQ is essential for the maintenance of envelope integrity under bleach stress, rescuing a wide series of structurally unrelated periplasmic proteins from methionine oxidation, including the primary periplasmic chaperone SurA and the lipoprotein Pal. The catalytic subunit MsrP is non-stereospecific, being able to reduce both (R-) and (S-) diastereoisomers of methionine sulfoxide. This Salmonella arizonae (strain ATCC BAA-731 / CDC346-86 / RSK2980) protein is Protein-methionine-sulfoxide reductase catalytic subunit MsrP.